A 248-amino-acid polypeptide reads, in one-letter code: Probable transcriptional regulatory protein Acid345_2125 (248 aa).

The protein belongs to the TACO1 family.

It is found in the cytoplasm. This Koribacter versatilis (strain Ellin345) protein is Probable transcriptional regulatory protein Acid345_2125.